We begin with the raw amino-acid sequence, 585 residues long: Mitochondrial sodium/calcium exchanger protein (585 aa).

Positions 1–26 are cleaved as a signal peptide; sequence MAGRWLDPLWAPGFLCVALILETASG. At 27-95 the chain is on the extracellular side; the sequence is AGDLSTKAHG…GIFCYFPPNL (69 aa). N46 is a glycosylation site (N-linked (GlcNAc...) asparagine). A helical transmembrane segment spans residues 96-116; sequence LPLAITLYVFWLLYLFLILGV. The Cytoplasmic portion of the chain corresponds to 117–140; it reads TAAKFFCPNLSAISTSLKLSHNVA. Residues 141–161 form a helical membrane-spanning segment; that stretch reads GVTFLAFGNGAPDIFSALVAF. Residues 162–168 are Extracellular-facing; sequence SDPRTAG. The helical transmembrane segment at 169-189 threads the bilayer; sequence LAIGALFGAGVLVTTVVAGGI. At 190 to 205 the chain is on the cytoplasmic side; sequence TILRPFMAASRPFLRD. The chain crosses the membrane as a helical span at residues 206–226; that stretch reads ITFYMVAVFLTFTALYLGRIT. Position 227 (L227) is a topological domain, extracellular. Residues 228–247 form a helical membrane-spanning segment; that stretch reads VWALGYLGLYVFYVVTVIIC. The Cytoplasmic portion of the chain corresponds to 248–325; the sequence is TWVYQRQRSR…KWRTQSISCK (78 aa). Residue S258 is modified to Phosphoserine; by PKA. The helical transmembrane segment at 326–346 threads the bilayer; it reads LLKVAKLPVEFLLLLTVPVVD. Topologically, residues 347-360 are extracellular; that stretch reads PDKDDRNWKRPLNC. A helical transmembrane segment spans residues 361 to 381; that stretch reads LQLVISPLVLVLTLQSGVYGI. Residues 382–383 are Cytoplasmic-facing; the sequence is YE. Residues 384–404 form a helical membrane-spanning segment; that stretch reads IGGLLPVWAVVVIVGTALASV. Over 405 to 416 the chain is Extracellular; sequence TFFATSNSEPPR. Residues 417–437 form a helical membrane-spanning segment; the sequence is LHWLFAFLGFLTSALWINAAA. The Cytoplasmic portion of the chain corresponds to 438 to 445; that stretch reads TEVVNILR. Residues 446 to 466 traverse the membrane as a helical segment; that stretch reads SLGVVFRLSNTVLGLTLLAWG. Topologically, residues 467–491 are extracellular; that stretch reads NSIGDAFSDFTLARQGYPRMAFSAC. A helical transmembrane segment spans residues 492-512; the sequence is FGGIIFNILVGVGLGCLLQIV. Topologically, residues 513–525 are cytoplasmic; sequence RSHASEVKLEPDG. Residues 526 to 546 traverse the membrane as a helical segment; it reads LLVWVLASALGLSLVFSLVSV. The Extracellular portion of the chain corresponds to 547–559; the sequence is PLQCFQLSKAYGL. A helical transmembrane segment spans residues 560-580; that stretch reads CLLLFYICFIVVVLLTEFGVI. The Cytoplasmic segment spans residues 581–585; sequence HLKAD.

Belongs to the Ca(2+):cation antiporter (CaCA) (TC 2.A.19) family. SLC24A subfamily. Post-translationally, phosphorylation at Ser-258 by PKA prevents calcium overload. As to expression, widely expressed. Present at higher level in pancreas, stomach, skeletal muscle and skin (at protein level). Ubiquitously expressed.

It is found in the mitochondrion inner membrane. It carries out the reaction Ca(2+)(in) + 3 Na(+)(out) = Ca(2+)(out) + 3 Na(+)(in). It catalyses the reaction 3 Li(+)(out) + Ca(2+)(in) = 3 Li(+)(in) + Ca(2+)(out). Its activity is regulated as follows. Inhibited by the sodium/calcium exchanger inhibitor CGP-37157. Strongly inhibited by zinc. In terms of biological role, mitochondrial sodium/calcium antiporter that mediates sodium-dependent calcium efflux from mitochondrion, by mediating the exchange of 3 sodium ions per 1 calcium ion. Plays a central role in mitochondrial calcium homeostasis by mediating mitochondrial calcium extrusion: calcium efflux is essential for mitochondrial function and cell survival, notably in cardiomyocytes. Regulates rates of glucose-dependent insulin secretion in pancreatic beta-cells during the first phase of insulin secretion: acts by mediating efflux of calcium from mitochondrion, thereby affecting cytoplasmic calcium responses. Required for store-operated Ca(2+) entry (SOCE) and Ca(2+) release-activated Ca(2+) (CRAC) channel regulation: sodium transport by SLC8B1 leads to promote calcium-shuttling that modulates mitochondrial redox status, thereby regulating SOCE activity. Involved in B-lymphocyte chemotaxis. Able to transport Ca(2+) in exchange of either Li(+) or Na(+), explaining how Li(+) catalyzes Ca(2+) exchange. In contrast to other members of the family its function is independent of K(+). The polypeptide is Mitochondrial sodium/calcium exchanger protein (Rattus norvegicus (Rat)).